The chain runs to 390 residues: Prostaglandin E2 receptor EP3 subtype (390 aa).

The Extracellular segment spans residues 1-53; sequence MKETRGYGGDAPFCTRLNHSYTGMWAPERSAEARGNLTRPPGSGEDCGSVSVA. N-linked (GlcNAc...) asparagine glycans are attached at residues Asn18 and Asn36. The chain crosses the membrane as a helical span at residues 54-78; sequence FPITMLLTGFVGNALAMLLVSRSYR. At 79 to 91 the chain is on the cytoplasmic side; it reads RRESKRKKSFLLC. Residues 92–112 form a helical membrane-spanning segment; that stretch reads IGWLALTDLVGQLLTTPVVIV. The Extracellular segment spans residues 113 to 131; the sequence is VYLSKQRWEHIDPSGRLCT. A helical membrane pass occupies residues 132–153; sequence FFGLTMTVFGLSSLFIASAMAV. The Cytoplasmic portion of the chain corresponds to 154 to 175; the sequence is ERALAIRAPHWYASHMKTRATR. The chain crosses the membrane as a helical span at residues 176-197; that stretch reads AVLLGVWLAVLAFALLPVLGVG. Topologically, residues 198 to 227 are extracellular; the sequence is QYTVQWPGTWCFISTGRGGNGTSSSHNWGN. A helical membrane pass occupies residues 228–253; the sequence is LFFASAFAFLGLLALTVTFSCNLATI. The Cytoplasmic portion of the chain corresponds to 254–283; it reads KALVSRCRAKATASQSSAQWGRITTETAIQ. A helical transmembrane segment spans residues 284–307; sequence LMGIMCVLSVCWSPLLIMMLKMIF. Residues 308-327 lie on the Extracellular side of the membrane; it reads NQTSVEHCKTHTEKQKECNF. The helical transmembrane segment at 328-349 threads the bilayer; the sequence is FLIAVRLASLNQILDPWVYLLL. At 350-390 the chain is on the cytoplasmic side; it reads RKILLRKFCQIRYHTNNYASSSTSLPCQCSSTLMWSDHLER.

This sequence belongs to the G-protein coupled receptor 1 family. As to quaternary structure, interacts (via C-terminus) with MKLN1. In terms of tissue distribution, detected in kidney. Expressed in small intestine, heart, pancreas, gastric fundic mucosa, mammary artery and pulmonary vessels.

It is found in the cell membrane. Its function is as follows. Receptor for prostaglandin E2 (PGE2). The activity of this receptor can couple to both the inhibition of adenylate cyclase mediated by G(i) proteins, and to an elevation of intracellular calcium. Required for normal development of fever in response to pyrinogens, including IL1B, prostaglandin E2 and bacterial lipopolysaccharide (LPS). Required for normal potentiation of platelet aggregation by prostaglandin E2, and thus plays a role in the regulation of blood coagulation. Required for increased HCO3(-) secretion in the duodenum in response to mucosal acidification, and thereby contributes to the protection of the mucosa against acid-induced ulceration. Not required for normal kidney function, normal urine volume and osmolality. This chain is Prostaglandin E2 receptor EP3 subtype (PTGER3), found in Homo sapiens (Human).